Reading from the N-terminus, the 1030-residue chain is MKASLTFSLSGIYAPCSISRDIYLEYGDKKAECLYGTIRLPQYGPGCTPGKIVHCVLDDSLPFCSIVVPSKLFGFMPTQPTMDFCYFEPILDNVVPVLDSVTFLINEQLYSKLMDLPQEMQQIQFLHYKYNINSMETVVHSRDILTSGLCQILNCSPFPQGLVDFTETQLILVNDTEQKLSALKYANEDEEYALPKIGTNSALSIDLESLPCTISRDLLRPAPHINDDNSIYAFTDAETLLRLDVTSGSFITVSNMGCVRLVKLFVLLLPNGFKKRTIYAPPKIIASFPDCSVVTISKSNIGHTDIPIANQVFISRVGGWLQSQKCFQNIILTTLKKFFSESKRILCQNDLIPIAFDSSMADLNIAEENDESDDEDELGQYYKNDSLVWFFVTSAELDCFSKDNSHFIIDPNRTKLITTNITNRRPLPLSRSNLQRYYGFAETFYYDLHIFPYVRQLVNILETSFNCSQRGITLNASVLLHSTTNNVGKATMVRFASKYLGIHLLEIDCLSLTSNSRQLDSTSKIIGYIRAKCENVLPYASPAVIFLAHLDSILLDVNANQDPEAIKLQKSINFEMSKLLDDFTFKFPGTTFVGSVNNIDNVPSSFRSHMRFEILVPVPSEAQRLRIFQWYLSSHELNRDVQQKVPVSYMDNISFSSLSSYSAGLTPLDIKSIVETARMTATARFYQESKKCGWLPQSILITQEDLSKATSKARNEFSVSIGAPQIPNVTWDDIGGIDFVKGEILDTIDMPLKHPELFTSGMKKRSGILFYGPPGTGKTLMAKAIATNFSLNFFSVKGPELLNMYIGESEANVRRVFQKAREAKPCVIFFDEIDSVAPKRGNQGDSGGVMDRIVSQLLAELDGMSTDADGVFVIGATNRPDLLDEALLRPGRFDKLLYLGIPDTDTKQLNILEALTRKFVLDNDVKLIELAKLCPFNYTGADFYALCSDAMLNAMSRIARMVEKKVSQHNELTGENISTRRWFDKIATKEDTKVVVKMEDFLKAQEQLTPSVSRAELNHYEAVRANFEGA.

Residues valine 478–alanine 683 form an AAA-cassette D1 region. Residues glycine 767–serine 956 are AAA-cassette D2. Residue glycine 772 to threonine 779 coordinates ATP.

It belongs to the AAA ATPase family. Interacts with PEX1; forming the PEX1-PEX6 AAA ATPase complex, which is composed of a heterohexamer formed by a trimer of PEX1-PEX6 dimers. Interacts with PEX15; anchors PEX1-PEX6 heterooligomers to the peroxisomal membrane and mediates their association with the peroxisomal importomer. Interacts with UBP15.

It is found in the cytoplasm. Its subcellular location is the cytosol. The protein localises to the peroxisome membrane. It carries out the reaction ATP + H2O = ADP + phosphate + H(+). Functionally, component of the PEX1-PEX6 AAA ATPase complex, a protein dislocase complex that mediates the ATP-dependent extraction of the PEX5 receptor from peroxisomal membranes, an essential step for PEX5 recycling. Specifically recognizes PEX5 monoubiquitinated at 'Cys-6', and pulls it out of the peroxisome lumen through the PEX2-PEX10-PEX12 retrotranslocation channel. Extraction by the PEX1-PEX6 AAA ATPase complex is accompanied by unfolding of the TPR repeats and release of bound cargo from PEX5. The sequence is that of Peroxisomal ATPase PEX6 from Saccharomyces cerevisiae (strain ATCC 204508 / S288c) (Baker's yeast).